We begin with the raw amino-acid sequence, 95 residues long: Small ubiquitin-related modifier 2 (95 aa).

Met1 participates in a covalent cross-link: Peptide (Met-Gly) (interchain with G-Cter in ubiquitin). Glycyl lysine isopeptide (Lys-Gly) (interchain with G-Cter in SUMO2) cross-links involve residues Lys5 and Lys7. Lys11 carries the post-translational modification N6-acetyllysine; alternate. Lys11 participates in a covalent cross-link: Glycyl lysine isopeptide (Lys-Gly) (interchain with G-Cter in SUMO); alternate. A Glycyl lysine isopeptide (Lys-Gly) (interchain with G-Cter in SUMO1); alternate cross-link involves residue Lys11. A Glycyl lysine isopeptide (Lys-Gly) (interchain with G-Cter in SUMO2); alternate cross-link involves residue Lys11. Lys11 is covalently cross-linked (Glycyl lysine isopeptide (Lys-Gly) (interchain with G-Cter in ubiquitin); alternate). The Ubiquitin-like domain occupies 16 to 95 (DHINLKVAGQ…VFQQQTGGVY (80 aa)). Lys21 participates in a covalent cross-link: Glycyl lysine isopeptide (Lys-Gly) (interchain with G-Cter in SUMO2). Residue Gly93 forms a Glycyl lysine isopeptide (Gly-Lys) (interchain with K-? in acceptor proteins) linkage. Positions 94 to 95 (VY) are excised as a propeptide.

It belongs to the ubiquitin family. SUMO subfamily. Interacts with SAE2 and UBE2I. Interacts with ZNF451. Identified in a complex with ZNF451 and UBE2I/UBC9, where one ZNF451 interacts with one UBE2I/UBC9 and two SUMO2 chains, one bound to the UBE2I/UBC9 active site and the other to another region of the same UBE2I/UBC9 molecule. Covalently attached to a number of proteins. Interacts with PELP1. Interacts with USP25; the interaction sumoylates USP25. Interacts with SIMC1, CASP8AP2, RNF111 and SOBP (via SIM domains). Interacts with MTA1. Interacts with HINT1. Interacts with GCNA (via SIM domains); this interaction allows the GCNA recruitment to DPCs sites. Polymeric chains can be formed through Lys-11 cross-linking. Polymeric SUMO2 chains undergo 'Lys-6'-, 'Lys-11'-, 'Lys-48'- and 'Lys-63'-linked polyubiquitination by RNF4. In terms of processing, cleavage of precursor form by SENP1 or SENP2 is necessary for function. Post-translationally, monoubiquitinated N-terminally by UBE2W, which primes it for RNF4-dependent polyubiquitination by the UBE2V1-UBE2N heterodimer.

The protein localises to the nucleus. Its subcellular location is the PML body. Ubiquitin-like protein that can be covalently attached to proteins as a monomer or as a lysine-linked polymer. Covalent attachment via an isopeptide bond to its substrates requires prior activation by the E1 complex SAE1-SAE2 and linkage to the E2 enzyme UBE2I, and can be promoted by an E3 ligase such as PIAS1-4, RANBP2 or CBX4. This post-translational modification on lysine residues of proteins plays a crucial role in a number of cellular processes such as nuclear transport, DNA replication and repair, mitosis and signal transduction. Polymeric SUMO2 chains are also susceptible to polyubiquitination which functions as a signal for proteasomal degradation of modified proteins. Plays a role in the regulation of sumoylation status of SETX. This chain is Small ubiquitin-related modifier 2, found in Bos taurus (Bovine).